We begin with the raw amino-acid sequence, 304 residues long: UDP-3-O-acyl-N-acetylglucosamine deacetylase (304 aa).

Residues H78, H237, and D241 each contribute to the Zn(2+) site. H264 serves as the catalytic Proton donor.

Belongs to the LpxC family. The cofactor is Zn(2+).

The enzyme catalyses a UDP-3-O-[(3R)-3-hydroxyacyl]-N-acetyl-alpha-D-glucosamine + H2O = a UDP-3-O-[(3R)-3-hydroxyacyl]-alpha-D-glucosamine + acetate. The protein operates within glycolipid biosynthesis; lipid IV(A) biosynthesis; lipid IV(A) from (3R)-3-hydroxytetradecanoyl-[acyl-carrier-protein] and UDP-N-acetyl-alpha-D-glucosamine: step 2/6. Its function is as follows. Catalyzes the hydrolysis of UDP-3-O-myristoyl-N-acetylglucosamine to form UDP-3-O-myristoylglucosamine and acetate, the committed step in lipid A biosynthesis. This Legionella pneumophila (strain Lens) protein is UDP-3-O-acyl-N-acetylglucosamine deacetylase.